A 72-amino-acid chain; its full sequence is Putative transmembrane protein DDB_G0272126 (72 aa).

The next 2 membrane-spanning stretches (helical) occupy residues lysine 6 to isoleucine 26 and isoleucine 38 to glycine 58.

The protein resides in the membrane. The chain is Putative transmembrane protein DDB_G0272126 from Dictyostelium discoideum (Social amoeba).